The chain runs to 308 residues: Aspartate carbamoyltransferase catalytic subunit (308 aa).

2 residues coordinate carbamoyl phosphate: Arg49 and Thr50. Residue Lys77 coordinates L-aspartate. Arg99, His127, and Gln130 together coordinate carbamoyl phosphate. 2 residues coordinate L-aspartate: Arg160 and Arg211. The carbamoyl phosphate site is built by Ala252 and Pro253.

The protein belongs to the aspartate/ornithine carbamoyltransferase superfamily. ATCase family. In terms of assembly, heterododecamer (2C3:3R2) of six catalytic PyrB chains organized as two trimers (C3), and six regulatory PyrI chains organized as three dimers (R2).

The catalysed reaction is carbamoyl phosphate + L-aspartate = N-carbamoyl-L-aspartate + phosphate + H(+). Its pathway is pyrimidine metabolism; UMP biosynthesis via de novo pathway; (S)-dihydroorotate from bicarbonate: step 2/3. In terms of biological role, catalyzes the condensation of carbamoyl phosphate and aspartate to form carbamoyl aspartate and inorganic phosphate, the committed step in the de novo pyrimidine nucleotide biosynthesis pathway. The polypeptide is Aspartate carbamoyltransferase catalytic subunit (Geobacillus kaustophilus (strain HTA426)).